The primary structure comprises 63 residues: MIVVPVKEGENIERALKRFKRKFEKTGAVRELRARQAFEKPSVAKRKKMQKAIYVKQLQVAEE.

This sequence belongs to the bacterial ribosomal protein bS21 family.

The sequence is that of Small ribosomal subunit protein bS21 from Porphyromonas gingivalis (strain ATCC BAA-308 / W83).